A 386-amino-acid polypeptide reads, in one-letter code: Phosphoglycerate kinase (386 aa).

Residues 21-23, arginine 36, 59-62, arginine 113, and arginine 146 contribute to the substrate site; these read DLN and HLGR. ATP is bound by residues lysine 197, glutamate 314, and 340–343; that span reads GGDT.

This sequence belongs to the phosphoglycerate kinase family. Monomer.

It is found in the cytoplasm. The enzyme catalyses (2R)-3-phosphoglycerate + ATP = (2R)-3-phospho-glyceroyl phosphate + ADP. Its pathway is carbohydrate degradation; glycolysis; pyruvate from D-glyceraldehyde 3-phosphate: step 2/5. The polypeptide is Phosphoglycerate kinase (Azotobacter vinelandii (strain DJ / ATCC BAA-1303)).